The sequence spans 275 residues: 3-methyl-2-oxobutanoate hydroxymethyltransferase (275 aa).

Mg(2+) contacts are provided by aspartate 55 and aspartate 94. 3-methyl-2-oxobutanoate is bound by residues aspartate 55 to serine 56, aspartate 94, and lysine 123. Position 125 (glutamate 125) interacts with Mg(2+). Glutamate 192 serves as the catalytic Proton acceptor.

The protein belongs to the PanB family. As to quaternary structure, homodecamer; pentamer of dimers. Mg(2+) is required as a cofactor.

The protein resides in the cytoplasm. It catalyses the reaction 3-methyl-2-oxobutanoate + (6R)-5,10-methylene-5,6,7,8-tetrahydrofolate + H2O = 2-dehydropantoate + (6S)-5,6,7,8-tetrahydrofolate. It participates in cofactor biosynthesis; (R)-pantothenate biosynthesis; (R)-pantoate from 3-methyl-2-oxobutanoate: step 1/2. Functionally, catalyzes the reversible reaction in which hydroxymethyl group from 5,10-methylenetetrahydrofolate is transferred onto alpha-ketoisovalerate to form ketopantoate. The sequence is that of 3-methyl-2-oxobutanoate hydroxymethyltransferase from Halorhodospira halophila (strain DSM 244 / SL1) (Ectothiorhodospira halophila (strain DSM 244 / SL1)).